Reading from the N-terminus, the 499-residue chain is MFSRRNLLALGLAATVSAGPCDIYEAGDTPCVAAHSTTRALYSSFSGALYQLQRGSDDTTTTISPLTAGGIADASAQDTFCANTTCLITIIYDQSGNGNHLTQAPPGGFDGPDTDGYDNLASAIGAPVTLNGQKAYGVFMSPGTGYRNNEATGTATGDEAEGMYAVLDGTHYNDACCFDYGNAETSSTDTGAGHMEAIYLGNSTTWGYGAGDGPWIMVDMENNLFSGADEGYNSGDPSISYRFVTAAVKGGADKWAIRGANAASGSLSTYYSGARPDYSGYNPMSKEGAIILGIGGYNSNGAQGTFYEGVMTSGYPSDDTENSVQENIVAAKYVVGSLVSGPSFTSGEVVSLRVTTPGYTTRYIAHTDTTVNTQVVDDDSSTTLKEEASWTVVTGLANSQCFSFESVDTPGSYIRHYNFELLLNANDGTKQFHEDATFCPQAALNGEGTSLRSWSYPTRYFRHYENVLYAASNGGVQTFDSKTSFNNDVSFEIETAFAS.

The N-terminal stretch at 1–17 is a signal peptide; that stretch reads MFSRRNLLALGLAATVS. Residues 18-335 are catalytic; it reads AGPCDIYEAG…ENIVAAKYVV (318 aa). 3 cysteine pairs are disulfide-bonded: C21/C31, C81/C86, and C176/C177. The N-linked (GlcNAc...) asparagine glycan is linked to N83. The N-linked (GlcNAc...) asparagine glycan is linked to N202. Residue D219 coordinates substrate. E221 functions as the Nucleophile in the catalytic mechanism. 11 residues coordinate substrate: N222, N223, G296, H416, N418, F419, D435, H463, E465, L468, and D488. An ABD region spans residues 336–499; sequence GSLVSGPSFT…SFEIETAFAS (164 aa). C401 and C439 are disulfide-bonded.

The protein belongs to the glycosyl hydrolase 54 family.

It is found in the secreted. The enzyme catalyses Hydrolysis of terminal non-reducing alpha-L-arabinofuranoside residues in alpha-L-arabinosides.. It participates in glycan metabolism; L-arabinan degradation. Its function is as follows. Alpha-L-arabinofuranosidase involved in the degradation of arabinoxylan, a major component of plant hemicellulose. Able to hydrolyze 1,5-, 1,3- and 1,2-alpha-linkages not only in L-arabinofuranosyl oligosaccharides, but also in polysaccharides containing terminal non-reducing L-arabinofuranoses in side chains, like L-arabinan, arabinogalactan and arabinoxylan. This is Probable alpha-L-arabinofuranosidase B (abfB) from Aspergillus awamori (Black koji mold).